The sequence spans 397 residues: Gamma tubulin complex adapter mto2 (397 aa).

Positions 1 to 13 are enriched in basic and acidic residues; that stretch reads MSEHNYQSDREVA. Disordered stretches follow at residues 1–44, 269–298, and 346–397; these read MSEH…WRAG, YTSS…PFPS, and RSDP…TPSP. 4 stretches are compositionally biased toward polar residues: residues 22 to 37, 269 to 281, 352 to 369, and 382 to 397; these read ASAN…STPR, YTSS…QRMA, RHVS…SPTS, and SPAS…TPSP. Phosphoserine is present on residues S366 and S396.

As to quaternary structure, interacts with mto1; the interaction is direct and required for efficient binding to the gamma-tubulin complex. Interacts with gamma tubulin complex subunits alp4, alp6 and gtb1.

The protein resides in the cytoplasm. The protein localises to the cytoskeleton. Its subcellular location is the microtubule organizing center. It is found in the spindle pole body. In terms of biological role, acts together with mto1 to promote nucleation of at least a subset of cytoplasmic microtubules, by recruiting the gamma-tubulin complex to the interphase microtubule organizing center (iMTOC) and to the equatorial MTOC (eMTOC) during anaphase. Does not appear to be required for cytoplasmic astral microtubule nucleation from the spindle pole body (SPB). Required to establish the eMTOC, and thereby to tether the cytokinetic actin ring. The polypeptide is Gamma tubulin complex adapter mto2 (Schizosaccharomyces pombe (strain 972 / ATCC 24843) (Fission yeast)).